A 324-amino-acid chain; its full sequence is Glutathione synthetase (324 aa).

An ATP-grasp domain is found at 133-317; that stretch reads KMYALQFTKA…LAHQVIQWVE (185 aa). 159–215 provides a ligand contact to ATP; the sequence is VEAKGATVLKPLGNKAGEGILFLQAGDRNFNSIVELSTQQGRLPVMVQTYLPEAKEG. 2 residues coordinate Mg(2+): glutamate 288 and asparagine 290.

The protein belongs to the prokaryotic GSH synthase family. Mg(2+) is required as a cofactor. It depends on Mn(2+) as a cofactor.

The catalysed reaction is gamma-L-glutamyl-L-cysteine + glycine + ATP = glutathione + ADP + phosphate + H(+). It participates in sulfur metabolism; glutathione biosynthesis; glutathione from L-cysteine and L-glutamate: step 2/2. The polypeptide is Glutathione synthetase (Nostoc sp. (strain PCC 7120 / SAG 25.82 / UTEX 2576)).